We begin with the raw amino-acid sequence, 750 residues long: Photosystem I P700 chlorophyll a apoprotein A1 (750 aa).

8 helical membrane-spanning segments follow: residues 70–93, 156–179, 195–219, 291–309, 346–369, 385–411, 433–455, and 531–549; these read VFSA…FHGA, LYCT…FHYH, LNHH…HVSL, IAHH…GHMY, WHAQ…HHMY, LSLF…IFMV, AIIS…LYIH, and FLVH…LILL. Residues C573 and C582 each contribute to the [4Fe-4S] cluster site. A run of 2 helical transmembrane segments spans residues 589–610 and 664–686; these read HVFL…HFSW and LSAY…MFLF. Position 675 (H675) interacts with chlorophyll a'. Residues M683 and Y691 each contribute to the chlorophyll a site. W692 lines the phylloquinone pocket. The chain crosses the membrane as a helical span at residues 724 to 744; that stretch reads AVGVTHYLLGGIATTWAFFLA.

This sequence belongs to the PsaA/PsaB family. The PsaA/B heterodimer binds the P700 chlorophyll special pair and subsequent electron acceptors. PSI consists of a core antenna complex that captures photons, and an electron transfer chain that converts photonic excitation into a charge separation. The eukaryotic PSI reaction center is composed of at least 11 subunits. P700 is a chlorophyll a/chlorophyll a' dimer, A0 is one or more chlorophyll a, A1 is one or both phylloquinones and FX is a shared 4Fe-4S iron-sulfur center. serves as cofactor.

Its subcellular location is the plastid. It is found in the chloroplast thylakoid membrane. The enzyme catalyses reduced [plastocyanin] + hnu + oxidized [2Fe-2S]-[ferredoxin] = oxidized [plastocyanin] + reduced [2Fe-2S]-[ferredoxin]. Functionally, psaA and PsaB bind P700, the primary electron donor of photosystem I (PSI), as well as the electron acceptors A0, A1 and FX. PSI is a plastocyanin-ferredoxin oxidoreductase, converting photonic excitation into a charge separation, which transfers an electron from the donor P700 chlorophyll pair to the spectroscopically characterized acceptors A0, A1, FX, FA and FB in turn. Oxidized P700 is reduced on the lumenal side of the thylakoid membrane by plastocyanin. This is Photosystem I P700 chlorophyll a apoprotein A1 from Triticum aestivum (Wheat).